A 1053-amino-acid chain; its full sequence is SPX and EXS domain-containing protein 2 (1053 aa).

The SPX domain occupies 1-339 (MKFRDYLKDN…PRIAKECRKY (339 aa)). Positions 54 to 88 (NNINKNNNNNNNNNNNNNNNNNNNNNINNNNNNNN) are enriched in low complexity. A disordered region spans residues 54-137 (NNINKNNNNN…VGDEDGGDDD (84 aa)). Residues 95 to 112 (QTNSNNISIPNQMAPQES) show a composition bias toward polar residues. The span at 113-122 (SGEDEDDENE) shows a compositional bias: acidic residues. The next 10 helical transmembrane spans lie at 391 to 411 (YIIG…IFKF), 427 to 447 (MAWL…LFAL), 476 to 496 (YLMY…VYVD), 510 to 530 (YLLL…ILPF), 561 to 581 (FFMS…QQIV), 595 to 615 (GVCF…PFYW), 630 to 652 (FFPH…LLWV), 666 to 686 (ILWF…DFTV), 712 to 732 (WVYY…LIVF), and 745 to 765 (PLFL…FIFF). The region spanning 596–798 (VCFKHKAVIF…SQDYKNYMEE (203 aa)) is the EXS domain. 2 disordered regions span residues 799-871 (KKSR…VDDE) and 1023-1053 (HPEL…NKSR). Positions 842–853 (DDDDDDESIDSD) are enriched in acidic residues. The segment covering 1023-1040 (HPELNSSNRNQVDPNSPM) has biased composition (polar residues).

Belongs to the SYG1 (TC 2.A.94) family.

Its subcellular location is the membrane. The chain is SPX and EXS domain-containing protein 2 from Dictyostelium discoideum (Social amoeba).